Reading from the N-terminus, the 205-residue chain is Holliday junction branch migration complex subunit RuvA (205 aa).

Positions 1-62 (MFEYVTGYVE…EDIMALYGFK (62 aa)) are domain I. Positions 63 to 141 (TREERLLFTK…DVVPDAFVDL (79 aa)) are domain II. The tract at residues 142–152 (FSDTERFDEKK) is flexible linker. A domain III region spans residues 153–205 (GSSAELDEALEALRALGYAEREVSRVVPELLKESLTTDQYIKKALSLLLNGKR).

It belongs to the RuvA family. In terms of assembly, homotetramer. Forms an RuvA(8)-RuvB(12)-Holliday junction (HJ) complex. HJ DNA is sandwiched between 2 RuvA tetramers; dsDNA enters through RuvA and exits via RuvB. An RuvB hexamer assembles on each DNA strand where it exits the tetramer. Each RuvB hexamer is contacted by two RuvA subunits (via domain III) on 2 adjacent RuvB subunits; this complex drives branch migration. In the full resolvosome a probable DNA-RuvA(4)-RuvB(12)-RuvC(2) complex forms which resolves the HJ.

It localises to the cytoplasm. Functionally, the RuvA-RuvB-RuvC complex processes Holliday junction (HJ) DNA during genetic recombination and DNA repair, while the RuvA-RuvB complex plays an important role in the rescue of blocked DNA replication forks via replication fork reversal (RFR). RuvA specifically binds to HJ cruciform DNA, conferring on it an open structure. The RuvB hexamer acts as an ATP-dependent pump, pulling dsDNA into and through the RuvAB complex. HJ branch migration allows RuvC to scan DNA until it finds its consensus sequence, where it cleaves and resolves the cruciform DNA. The polypeptide is Holliday junction branch migration complex subunit RuvA (Bacillus cereus (strain ATCC 14579 / DSM 31 / CCUG 7414 / JCM 2152 / NBRC 15305 / NCIMB 9373 / NCTC 2599 / NRRL B-3711)).